The primary structure comprises 617 residues: Elongation factor 4 (617 aa).

Residues 17 to 198 (AIIRNFCIIA…KIVRDLPAPV (182 aa)) enclose the tr-type G domain. GTP is bound by residues 29–34 (DHGKST) and 145–148 (NKID).

Belongs to the TRAFAC class translation factor GTPase superfamily. Classic translation factor GTPase family. LepA subfamily.

Its subcellular location is the cell membrane. The catalysed reaction is GTP + H2O = GDP + phosphate + H(+). Required for accurate and efficient protein synthesis under certain stress conditions. May act as a fidelity factor of the translation reaction, by catalyzing a one-codon backward translocation of tRNAs on improperly translocated ribosomes. Back-translocation proceeds from a post-translocation (POST) complex to a pre-translocation (PRE) complex, thus giving elongation factor G a second chance to translocate the tRNAs correctly. Binds to ribosomes in a GTP-dependent manner. The chain is Elongation factor 4 from Paenarthrobacter aurescens (strain TC1).